A 328-amino-acid polypeptide reads, in one-letter code: Ketol-acid reductoisomerase (NADP(+)) (328 aa).

Positions 2–181 (AKIYRETDAD…GFTRVGVIET (180 aa)) constitute a KARI N-terminal Rossmann domain. Residues 25–28 (YGIQ), Arg48, Ser52, and 82–85 (DMVQ) contribute to the NADP(+) site. The active site involves His107. Gly133 contributes to the NADP(+) binding site. Residues 182-327 (TFAEETETDL…EDLRRLMRSG (146 aa)) form the KARI C-terminal knotted domain. Mg(2+)-binding residues include Asp190, Glu194, Glu226, and Glu230. Ser251 serves as a coordination point for substrate.

This sequence belongs to the ketol-acid reductoisomerase family. It depends on Mg(2+) as a cofactor.

It carries out the reaction (2R)-2,3-dihydroxy-3-methylbutanoate + NADP(+) = (2S)-2-acetolactate + NADPH + H(+). It catalyses the reaction (2R,3R)-2,3-dihydroxy-3-methylpentanoate + NADP(+) = (S)-2-ethyl-2-hydroxy-3-oxobutanoate + NADPH + H(+). It functions in the pathway amino-acid biosynthesis; L-isoleucine biosynthesis; L-isoleucine from 2-oxobutanoate: step 2/4. It participates in amino-acid biosynthesis; L-valine biosynthesis; L-valine from pyruvate: step 2/4. In terms of biological role, involved in the biosynthesis of branched-chain amino acids (BCAA). Catalyzes an alkyl-migration followed by a ketol-acid reduction of (S)-2-acetolactate (S2AL) to yield (R)-2,3-dihydroxy-isovalerate. In the isomerase reaction, S2AL is rearranged via a Mg-dependent methyl migration to produce 3-hydroxy-3-methyl-2-ketobutyrate (HMKB). In the reductase reaction, this 2-ketoacid undergoes a metal-dependent reduction by NADPH to yield (R)-2,3-dihydroxy-isovalerate. The polypeptide is Ketol-acid reductoisomerase (NADP(+)) (Caldivirga maquilingensis (strain ATCC 700844 / DSM 13496 / JCM 10307 / IC-167)).